The following is a 186-amino-acid chain: Peptidyl-tRNA hydrolase (186 aa).

Tyr-14 provides a ligand contact to tRNA. The Proton acceptor role is filled by His-19. Tyr-61, Asn-63, and Asn-107 together coordinate tRNA.

Belongs to the PTH family. Monomer.

It localises to the cytoplasm. It carries out the reaction an N-acyl-L-alpha-aminoacyl-tRNA + H2O = an N-acyl-L-amino acid + a tRNA + H(+). Functionally, hydrolyzes ribosome-free peptidyl-tRNAs (with 1 or more amino acids incorporated), which drop off the ribosome during protein synthesis, or as a result of ribosome stalling. Its function is as follows. Catalyzes the release of premature peptidyl moieties from peptidyl-tRNA molecules trapped in stalled 50S ribosomal subunits, and thus maintains levels of free tRNAs and 50S ribosomes. The protein is Peptidyl-tRNA hydrolase of Helicobacter acinonychis (strain Sheeba).